The chain runs to 426 residues: Histidine--tRNA ligase (426 aa).

It belongs to the class-II aminoacyl-tRNA synthetase family. Homodimer.

It is found in the cytoplasm. It catalyses the reaction tRNA(His) + L-histidine + ATP = L-histidyl-tRNA(His) + AMP + diphosphate + H(+). The sequence is that of Histidine--tRNA ligase from Geobacillus kaustophilus (strain HTA426).